The chain runs to 295 residues: Elongation factor Ts (295 aa).

Residues 79-82 (TDFV) are involved in Mg(2+) ion dislocation from EF-Tu.

Belongs to the EF-Ts family.

The protein resides in the cytoplasm. In terms of biological role, associates with the EF-Tu.GDP complex and induces the exchange of GDP to GTP. It remains bound to the aminoacyl-tRNA.EF-Tu.GTP complex up to the GTP hydrolysis stage on the ribosome. The protein is Elongation factor Ts of Bacillus anthracis (strain A0248).